Reading from the N-terminus, the 317-residue chain is L-lactate dehydrogenase (317 aa).

NAD(+) contacts are provided by residues Val-16, Asp-37, Arg-42, Tyr-67, and 81-82 (GA). Residues Gln-84 and Arg-90 each coordinate substrate. NAD(+) is bound by residues Ser-103, 120 to 122 (AAN), and Ser-145. Substrate is bound at residue 122-125 (NPVD). 150–153 (DSAR) contributes to the substrate binding site. His-177 serves as the catalytic Proton acceptor. Tyr-221 carries the post-translational modification Phosphotyrosine. Thr-230 lines the substrate pocket.

This sequence belongs to the LDH/MDH superfamily. LDH family. Homotetramer.

It localises to the cytoplasm. It catalyses the reaction (S)-lactate + NAD(+) = pyruvate + NADH + H(+). It functions in the pathway fermentation; pyruvate fermentation to lactate; (S)-lactate from pyruvate: step 1/1. Catalyzes the conversion of lactate to pyruvate. The chain is L-lactate dehydrogenase from Limosilactobacillus fermentum (strain NBRC 3956 / LMG 18251) (Lactobacillus fermentum).